The following is a 469-amino-acid chain: Probable Xaa-Pro aminopeptidase PEPP (469 aa).

Residues Asp264, Asp275, Glu398, and Glu438 each coordinate Mn(2+).

This sequence belongs to the peptidase M24B family. Mn(2+) serves as cofactor.

It catalyses the reaction Release of any N-terminal amino acid, including proline, that is linked to proline, even from a dipeptide or tripeptide.. Its function is as follows. Catalyzes the removal of a penultimate prolyl residue from the N-termini of peptides. The chain is Probable Xaa-Pro aminopeptidase PEPP (PEPP) from Ajellomyces capsulatus (strain H143) (Darling's disease fungus).